Here is a 577-residue protein sequence, read N- to C-terminus: Proline--tRNA ligase (577 aa).

This sequence belongs to the class-II aminoacyl-tRNA synthetase family. ProS type 1 subfamily. Homodimer.

The protein resides in the cytoplasm. It catalyses the reaction tRNA(Pro) + L-proline + ATP = L-prolyl-tRNA(Pro) + AMP + diphosphate. In terms of biological role, catalyzes the attachment of proline to tRNA(Pro) in a two-step reaction: proline is first activated by ATP to form Pro-AMP and then transferred to the acceptor end of tRNA(Pro). As ProRS can inadvertently accommodate and process non-cognate amino acids such as alanine and cysteine, to avoid such errors it has two additional distinct editing activities against alanine. One activity is designated as 'pretransfer' editing and involves the tRNA(Pro)-independent hydrolysis of activated Ala-AMP. The other activity is designated 'posttransfer' editing and involves deacylation of mischarged Ala-tRNA(Pro). The misacylated Cys-tRNA(Pro) is not edited by ProRS. This is Proline--tRNA ligase from Herminiimonas arsenicoxydans.